Reading from the N-terminus, the 366-residue chain is Methylthioribose-1-phosphate isomerase (366 aa).

Catalysis depends on D260, which acts as the Proton donor.

The protein belongs to the eIF-2B alpha/beta/delta subunits family. MtnA subfamily.

The protein localises to the cytoplasm. It localises to the nucleus. It carries out the reaction 5-(methylsulfanyl)-alpha-D-ribose 1-phosphate = 5-(methylsulfanyl)-D-ribulose 1-phosphate. It participates in amino-acid biosynthesis; L-methionine biosynthesis via salvage pathway; L-methionine from S-methyl-5-thio-alpha-D-ribose 1-phosphate: step 1/6. In terms of biological role, catalyzes the interconversion of methylthioribose-1-phosphate (MTR-1-P) into methylthioribulose-1-phosphate (MTRu-1-P). The sequence is that of Methylthioribose-1-phosphate isomerase from Caenorhabditis elegans.